The primary structure comprises 235 residues: 2-C-methyl-D-erythritol 4-phosphate cytidylyltransferase (235 aa).

It belongs to the IspD/TarI cytidylyltransferase family. IspD subfamily.

The catalysed reaction is 2-C-methyl-D-erythritol 4-phosphate + CTP + H(+) = 4-CDP-2-C-methyl-D-erythritol + diphosphate. Its pathway is isoprenoid biosynthesis; isopentenyl diphosphate biosynthesis via DXP pathway; isopentenyl diphosphate from 1-deoxy-D-xylulose 5-phosphate: step 2/6. Catalyzes the formation of 4-diphosphocytidyl-2-C-methyl-D-erythritol from CTP and 2-C-methyl-D-erythritol 4-phosphate (MEP). This chain is 2-C-methyl-D-erythritol 4-phosphate cytidylyltransferase, found in Pseudomonas fluorescens (strain SBW25).